A 486-amino-acid chain; its full sequence is Malonate-semialdehyde dehydrogenase (486 aa).

F154, K178, E181, R182, and S231 together coordinate NAD(+). The active-site Nucleophile is C286. E386 is an NAD(+) binding site.

This sequence belongs to the aldehyde dehydrogenase family. IolA subfamily. In terms of assembly, homotetramer.

It catalyses the reaction 3-oxopropanoate + NAD(+) + CoA + H2O = hydrogencarbonate + acetyl-CoA + NADH + H(+). The catalysed reaction is 2-methyl-3-oxopropanoate + NAD(+) + CoA + H2O = propanoyl-CoA + hydrogencarbonate + NADH + H(+). The protein operates within polyol metabolism; myo-inositol degradation into acetyl-CoA; acetyl-CoA from myo-inositol: step 7/7. Catalyzes the oxidation of malonate semialdehyde (MSA) and methylmalonate semialdehyde (MMSA) into acetyl-CoA and propanoyl-CoA, respectively. Is involved in a myo-inositol catabolic pathway. Bicarbonate, and not CO2, is the end-product of the enzymatic reaction. The protein is Malonate-semialdehyde dehydrogenase of Bacillus cereus (strain ATCC 10987 / NRS 248).